The following is a 402-amino-acid chain: Arginine deiminase (402 aa).

Cysteine 392 functions as the Amidino-cysteine intermediate in the catalytic mechanism.

It belongs to the arginine deiminase family.

The protein resides in the cytoplasm. The catalysed reaction is L-arginine + H2O = L-citrulline + NH4(+). Its pathway is amino-acid degradation; L-arginine degradation via ADI pathway; carbamoyl phosphate from L-arginine: step 1/2. The polypeptide is Arginine deiminase (Mycobacterium avium (strain 104)).